Consider the following 837-residue polypeptide: Ribosome biogenesis ATPase RIX7 (837 aa).

2 disordered regions span residues 36–56 (RSLR…EEDE) and 149–207 (ITST…LKSL). Ser-42 is subject to Phosphoserine. Acidic residues predominate over residues 43–56 (QGEEGENNEGEEDE). Residues 149 to 163 (ITSTWSKSGSVSESI) show a composition bias toward polar residues. Over residues 176-192 (KSKKRSKEGTCKVKRQK) the composition is skewed to basic residues. 246-253 (GPPGCGKT) is a binding site for ATP. The disordered stretch occupies residues 443 to 468 (PTTATDSSEDNMEIDETANGDESSLK). Positions 449-461 (SSEDNMEIDETAN) are enriched in acidic residues. Position 574–581 (574–581 (GPPGCGKT)) interacts with ATP.

The protein belongs to the AAA ATPase family.

Its subcellular location is the nucleus. It is found in the nucleolus. Involved in ribosome biogenesis. Seems to be required for restructuring nucleoplasmic 60S pre-ribosomal particles to make them competent for nuclear export. The chain is Ribosome biogenesis ATPase RIX7 (RIX7) from Saccharomyces cerevisiae (strain ATCC 204508 / S288c) (Baker's yeast).